Reading from the N-terminus, the 289-residue chain is MGASLNEIKTKIASTKKTSQITGAMQMVSAAKLQKAESHAKAFQIYAEKVRKITTDLVSSDKEPAKNPMMIKREVKKTGYLVITSDRGLVGGYNSNILKSVMNTIRKRHANESEYTILALGGTGADFFKARNVKVSYVLRGLSDQPTFEEVRAIVTEAVTEYQAEEFDELYVCYNHHVNSLVSDARMEKMLPISFEESGQQKPSLETFELEPDRETILNQLLPQYAESMIYGSIVDAKTAEHAAGMTAMRTATDNAHSVINDLTIQYNRARQASITQEITEIVAGASAL.

It belongs to the ATPase gamma chain family. As to quaternary structure, F-type ATPases have 2 components, CF(1) - the catalytic core - and CF(0) - the membrane proton channel. CF(1) has five subunits: alpha(3), beta(3), gamma(1), delta(1), epsilon(1). CF(0) has three main subunits: a, b and c.

It is found in the cell membrane. Produces ATP from ADP in the presence of a proton gradient across the membrane. The gamma chain is believed to be important in regulating ATPase activity and the flow of protons through the CF(0) complex. This chain is ATP synthase gamma chain, found in Lactococcus lactis subsp. lactis (strain IL1403) (Streptococcus lactis).